Here is a 141-residue protein sequence, read N- to C-terminus: Protein X (141 aa).

The interval 24–52 (QSSGPPFPRPAAGSAASSTSSPSPSDESD) is disordered. Over residues 33–48 (PAAGSAASSTSSPSPS) the composition is skewed to low complexity. Positions 68-113 (PCCLVFTCADLRTMDSTVNFVSWHAKRQLGMPSKDLWTPYIKDQLL) are mitochondrial targeting sequence.

It belongs to the orthohepadnavirus protein X family. As to quaternary structure, may form homodimer. May interact with host CEBPA, CFLAR, CREB1, DDB1, E4F1, HBXIP, HSPD1/HSP60, NFKBIA, POLR2E and SMAD4. Interacts with host SMC5-SMC6 complex and induces its degradation. Interacts with host TRPC4AP; leading to prevent ubiquitination of TRPC4AP. Interacts with host PLSCR1; this interaction promotes ubiquitination and degradation of HBx and impairs HBx-mediated cell proliferation. Post-translationally, a fraction may be phosphorylated in insect cells and HepG2 cells, a human hepatoblastoma cell line. Phosphorylated in vitro by host protein kinase C or mitogen-activated protein kinase. N-acetylated in insect cells.

It localises to the host cytoplasm. Its subcellular location is the host nucleus. The protein resides in the host mitochondrion. Functionally, multifunctional protein that plays a role in silencing host antiviral defenses and promoting viral transcription. Does not seem to be essential for HBV infection. May be directly involved in development of cirrhosis and liver cancer (hepatocellular carcinoma). Most of cytosolic activities involve modulation of cytosolic calcium. The effect on apoptosis is controversial depending on the cell types in which the studies have been conducted. May induce apoptosis by localizing in mitochondria and causing loss of mitochondrial membrane potential. May also modulate apoptosis by binding host CFLAR, a key regulator of the death-inducing signaling complex (DISC). Promotes viral transcription by using the host E3 ubiquitin ligase DDB1 to target the SMC5-SMC6 complex to proteasomal degradation. This host complex would otherwise bind to viral episomal DNA, and prevents its transcription. Moderately stimulates transcription of many different viral and cellular transcription elements. Promoters and enhancers stimulated by HBx contain DNA binding sites for NF-kappa-B, AP-1, AP-2, c-EBP, ATF/CREB, or the calcium-activated factor NF-AT. The protein is Protein X of Marmota monax (Woodchuck).